A 337-amino-acid polypeptide reads, in one-letter code: MKIGVLTGGGDAPGLNIAVYTFVKLAERKHEVYAIYHGWRGLLNKEVKRVSSRDLLDFAFSGGTYIRTSRTNPFKDEERARLLESNVKELGLDVVVAIGGDDTLGAAGEAQRRGILDAVGIPKTIDNDVYGTDYTIGFDSAVNAAIEATESFKTTLISHERIGVVEVMGREAGWIALFTGLSTMADAVLIPERPASWDSVAKRVKEAYNERRWALVVVSEGIKEYGGPKDEYGHSRLGGVGNELAEYIERSTGIEARAVVLGHTIRGVPPTAFDRILAVRYATAAYEAVENGRYGVMVAYSNGDIAYVPIVDVVGKNRLVSGYWMRLYETYWPDLAG.

A diphosphate-binding site is contributed by G10. D101 contributes to the Mg(2+) binding site. Substrate is bound by residues 124-126 (TID), R161, 168-170 (MGR), E220, R257, and 263-266 (HTIR). The Proton acceptor role is filled by D126.

It belongs to the phosphofructokinase type A (PFKA) family. Mixed-substrate PFK group III subfamily. As to quaternary structure, homodimer or homotrimer. Mg(2+) serves as cofactor.

It is found in the cytoplasm. The enzyme catalyses beta-D-fructose 6-phosphate + diphosphate = beta-D-fructose 1,6-bisphosphate + phosphate + H(+). It participates in carbohydrate degradation; glycolysis; D-glyceraldehyde 3-phosphate and glycerone phosphate from D-glucose: step 3/4. Its activity is regulated as follows. Non-allosteric. In terms of biological role, catalyzes the phosphorylation of D-fructose 6-phosphate, the first committing step of glycolysis. Uses inorganic phosphate (PPi) as phosphoryl donor instead of ATP like common ATP-dependent phosphofructokinases (ATP-PFKs), which renders the reaction reversible, and can thus function both in glycolysis and gluconeogenesis. Consistently, PPi-PFK can replace the enzymes of both the forward (ATP-PFK) and reverse (fructose-bisphosphatase (FBPase)) reactions. The sequence is that of Pyrophosphate--fructose 6-phosphate 1-phosphotransferase from Thermoproteus tenax (strain ATCC 35583 / DSM 2078 / JCM 9277 / NBRC 100435 / Kra 1).